The chain runs to 262 residues: Type II pantothenate kinase (262 aa).

ATP is bound at residue 7–14 (DAGGSLVK). Residue glutamate 71 is the Proton acceptor of the active site. ATP contacts are provided by residues threonine 101, 119–123 (GGLLT), and tyrosine 135.

The protein belongs to the type II pantothenate kinase family. In terms of assembly, homodimer.

Its subcellular location is the cytoplasm. The enzyme catalyses (R)-pantothenate + ATP = (R)-4'-phosphopantothenate + ADP + H(+). It participates in cofactor biosynthesis; coenzyme A biosynthesis; CoA from (R)-pantothenate: step 1/5. Catalyzes the phosphorylation of pantothenate (Pan), the first step in CoA biosynthesis. The chain is Type II pantothenate kinase from Oceanobacillus iheyensis (strain DSM 14371 / CIP 107618 / JCM 11309 / KCTC 3954 / HTE831).